The chain runs to 243 residues: Nuclear ubiquitous casein and cyclin-dependent kinase substrate 1 (243 aa).

The interval 1–243 (MSRPVRNRKV…SEDEAASGED (243 aa)) is disordered. Position 13 is a phosphotyrosine (Tyr-13). Residues Ser-14 and Ser-19 each carry the phosphoserine modification. Tyr-26 is subject to Phosphotyrosine. Over residues 35–51 (KKIRSSPREAKNKRRSG) the composition is skewed to basic residues. Residues Ser-54, Ser-58, Ser-61, Ser-73, Ser-75, and Ser-79 each carry the phosphoserine modification. Residues 64-77 (KDVKTKKDDSHSAE) are compositionally biased toward basic and acidic residues. Residues 91–100 (QQRQAASKAA) show a composition bias toward low complexity. Acidic residues predominate over residues 111-124 (VGSEEEPEEDDEAP). Phosphoserine occurs at positions 113, 130, 132, and 144. Residues 132 to 145 (SDEDFLMEDDDDSD) are compositionally biased toward acidic residues. The span at 149–174 (SKKKNKKMVKKSKPERKEKKMPKPRL) shows a compositional bias: basic residues. Position 179 is a phosphothreonine (Thr-179). Ser-181 is modified (phosphoserine). Over residues 197–206 (TSKEKTPSPK) the composition is skewed to basic and acidic residues. At Thr-202 the chain carries Phosphothreonine. Residues Ser-204, Ser-214, Ser-223, Ser-229, Ser-234, and Ser-240 each carry the phosphoserine modification. The span at 232-243 (EGSEDEAASGED) shows a compositional bias: acidic residues.

In terms of assembly, does not interact with RAD51. Phosphorylated in an ATM-dependent manner in response to DNA damage. Phosphorylated by CDK1 and casein kinase.

Its subcellular location is the nucleus. It localises to the chromosome. Chromatin-associated protein involved in DNA repair by promoting homologous recombination (HR). Binds double-stranded DNA (dsDNA) and secondary DNA structures, such as D-loop structures, but with less affinity than RAD51AP1. This chain is Nuclear ubiquitous casein and cyclin-dependent kinase substrate 1, found in Rattus norvegicus (Rat).